The following is a 134-amino-acid chain: Interleukin-5 (134 aa).

The signal sequence occupies residues 1–19; it reads MRMLLHLSLLALGAAYVYA. A glycan (O-linked (GalNAc...) threonine) is linked at T22. N47 and N90 each carry an N-linked (GlcNAc...) asparagine glycan.

It belongs to the IL-5 family. In terms of assembly, homodimer; disulfide-linked. Interacts with IL5RA. Interacts with CSF2RB.

It is found in the secreted. Homodimeric cytokine expressed predominantly by T-lymphocytes and NK cells that plays an important role in the survival, differentiation, and chemotaxis of eosinophils. Also acts on activated and resting B-cells to induce immunoglobulin production, growth, and differentiation. Mechanistically, exerts its biological effects through a receptor composed of IL5RA subunit and the cytokine receptor common subunit beta/CSF2RB. Binding to the receptor leads to activation of various kinases including LYN, SYK and JAK2 and thereby propagates signals through the RAS-MAPK and JAK-STAT5 pathways respectively. The polypeptide is Interleukin-5 (IL5) (Macaca mulatta (Rhesus macaque)).